We begin with the raw amino-acid sequence, 265 residues long: 3-methyl-2-oxobutanoate hydroxymethyltransferase (265 aa).

Mg(2+) is bound by residues aspartate 45 and aspartate 84. Residues 45 to 46 (DS), aspartate 84, and lysine 112 each bind 3-methyl-2-oxobutanoate. Glutamate 114 lines the Mg(2+) pocket. Catalysis depends on glutamate 181, which acts as the Proton acceptor.

The protein belongs to the PanB family. In terms of assembly, homodecamer; pentamer of dimers. Requires Mg(2+) as cofactor.

The protein localises to the cytoplasm. The enzyme catalyses 3-methyl-2-oxobutanoate + (6R)-5,10-methylene-5,6,7,8-tetrahydrofolate + H2O = 2-dehydropantoate + (6S)-5,6,7,8-tetrahydrofolate. It functions in the pathway cofactor biosynthesis; (R)-pantothenate biosynthesis; (R)-pantoate from 3-methyl-2-oxobutanoate: step 1/2. Catalyzes the reversible reaction in which hydroxymethyl group from 5,10-methylenetetrahydrofolate is transferred onto alpha-ketoisovalerate to form ketopantoate. The sequence is that of 3-methyl-2-oxobutanoate hydroxymethyltransferase from Yersinia pestis bv. Antiqua (strain Antiqua).